A 398-amino-acid polypeptide reads, in one-letter code: Keratinocyte differentiation factor 1 (398 aa).

2 disordered regions span residues 1–60 and 123–156; these read MPRP…SITF and AEAN…STMG. The segment covering 44–55 has biased composition (basic and acidic residues); it reads RPDPKDPGHHGP. Serine 218 is modified (phosphoserine). Disordered regions lie at residues 307–340 and 369–392; these read RKSR…TMVG and GAPG…SGAP. Over residues 377–389 the composition is skewed to polar residues; the sequence is HDSSFQGTDTDSS.

The protein resides in the cytoplasm. It localises to the cell junction. In terms of biological role, plays a role in the regulation of the epidermis formation during early development. Required both as an inhibitor of basal cell proliferation and a promoter of differentiation of basal progenitor cell progeny. The polypeptide is Keratinocyte differentiation factor 1 (KDF1) (Homo sapiens (Human)).